An 887-amino-acid chain; its full sequence is Fibroblast growth factor receptor 2 (887 aa).

Positions 1 to 18 (MLNKFIVIVTMLAMWNYA) are cleaved as a signal peptide. Residues 19 to 416 (QDCNFELSKN…KDCVGNSYFT (398 aa)) lie on the Extracellular side of the membrane. Ig-like C2-type domains are found at residues 22–115 (NFEL…EFIS) and 180–260 (VSGS…LRMK). Asn28, Asn74, Asn93, Asn230, Asn261, Asn268, Asn328, Asn334, and Asn364 each carry an N-linked (GlcNAc...) asparagine glycan. Cysteines 43 and 104 form a disulfide. Residues 297-387 (FNLNSRVCIN…YACRIINFKD (91 aa)) form the Ig-like C2-type 3 domain. A disulfide bridge links Cys313 with Cys380. The helical transmembrane segment at 417-437 (IIWYSISVGIIILVVISFLII) threads the bilayer. Topologically, residues 438–887 (RLYNKYSNGY…SNQCYSTTIV (450 aa)) are cytoplasmic. Residues 585–862 (LIIGSKIGEG…IIDKLTHIQL (278 aa)) form the Protein kinase domain. Residues 591-599 (IGEGAFGIV) and Lys619 contribute to the ATP site. Catalysis depends on Asp728, which acts as the Proton acceptor. The residue at position 757 (Tyr757) is a Phosphotyrosine; by autocatalysis.

It belongs to the protein kinase superfamily. Tyr protein kinase family. Fibroblast growth factor receptor subfamily. In terms of tissue distribution, expressed in brain, stem cells and the mesenchymal cells.

The protein localises to the membrane. The catalysed reaction is L-tyrosyl-[protein] + ATP = O-phospho-L-tyrosyl-[protein] + ADP + H(+). Receptor for basic fibroblast growth factor. This is Fibroblast growth factor receptor 2 (FGFR2) from Dugesia japonica (Planarian).